We begin with the raw amino-acid sequence, 616 residues long: Chaperone protein HscA (616 aa).

This sequence belongs to the heat shock protein 70 family.

Functionally, chaperone involved in the maturation of iron-sulfur cluster-containing proteins. Has a low intrinsic ATPase activity which is markedly stimulated by HscB. Involved in the maturation of IscU. This is Chaperone protein HscA from Salmonella paratyphi A (strain ATCC 9150 / SARB42).